Reading from the N-terminus, the 356-residue chain is Tyrosinase P (356 aa).

The N-terminal stretch at methionine 1–glycine 19 is a signal peptide. Asparagine 81 carries N-linked (GlcNAc...) asparagine glycosylation. Cu cation is bound by residues histidine 87 and histidine 96. Residues asparagine 148 and asparagine 193 are each glycosylated (N-linked (GlcNAc...) asparagine). Histidine 203 is a Cu cation binding site. A glycan (N-linked (GlcNAc...) asparagine) is linked at asparagine 226. Histidine 263 and histidine 286 together coordinate Cu cation. The N-linked (GlcNAc...) asparagine glycan is linked to asparagine 309.

It belongs to the tyrosinase family. The cofactor is Cu(2+). Post-translationally, glycosylated.

Its subcellular location is the endoplasmic reticulum lumen. It localises to the golgi apparatus lumen. The catalysed reaction is aspulvinone E + O2 = (5Z)-3-(3,4-dihydroxyphenyl)-5-[(3,4-dihydroxyphenyl)methylidene]-5-oxo-2,5-dihydrofuran-3-olate. It catalyses the reaction aspulvinone E + O2 = (2Z)-2-[(3,4-dioxocyclohexa-1,5-dien-1-yl)methylidene]-4-(4-hydroxyphenyl)-5-oxo-2,5-dihydrofuran-3-olate + H2O. Its activity is regulated as follows. Activity is inhibited by the presence of dithiothreitol (DTT). In terms of biological role, tyrosinase; part of the gene cluster that mediates the biosynthesis of Asp-melanin, a pigment that confers resistance against UV light and hampers phagocytosis by soil amoeba. The nonribosomal peptide synthase melA converts 4-hydroxyphenylpyruvate (4-HPPA) to aspulvinone E. The tyrosinase tyrP then performs hydroxylations of both aromatic moieties of aspulvinone E. The product of tyrP is highly unstable, and, due to the high reactivity of methides and ortho-diquinones, the polymeric Asp-melanin forms spontaneously. The protein is Tyrosinase P (tyrP) of Aspergillus terreus.